The primary structure comprises 394 residues: uncharacterized protein (394 aa).

A run of 11 helical transmembrane segments spans residues 10–30 (PALI…NYYA), 50–70 (FIVT…VPLG), 79–99 (IVSM…SQSL), 100–120 (AMMI…QILV), 138–158 (TIMS…GLLA), 166–186 (VFWV…RGLP), 218–238 (LLGC…AFLL), 243–263 (FNYS…GALG), 291–311 (WLAI…ILVL), 337–357 (LTAG…LISA), and 364–384 (GWAG…LVWW).

This sequence belongs to the major facilitator superfamily.

The protein resides in the cell inner membrane. This is an uncharacterized protein from Escherichia coli O157:H7.